A 315-amino-acid chain; its full sequence is tRNA dimethylallyltransferase (315 aa).

Residue 14–21 coordinates ATP; sequence GPTASGKT. Position 16 to 21 (16 to 21) interacts with substrate; it reads TASGKT. Interaction with substrate tRNA stretches follow at residues 39–42, 163–167, and 248–253; these read DSAL, QRIQR, and RCVGYR.

It belongs to the IPP transferase family. In terms of assembly, monomer. Requires Mg(2+) as cofactor.

It catalyses the reaction adenosine(37) in tRNA + dimethylallyl diphosphate = N(6)-dimethylallyladenosine(37) in tRNA + diphosphate. Its function is as follows. Catalyzes the transfer of a dimethylallyl group onto the adenine at position 37 in tRNAs that read codons beginning with uridine, leading to the formation of N6-(dimethylallyl)adenosine (i(6)A). This Paraburkholderia phytofirmans (strain DSM 17436 / LMG 22146 / PsJN) (Burkholderia phytofirmans) protein is tRNA dimethylallyltransferase.